The sequence spans 91 residues: UPF0250 protein PSPTO_4820 (91 aa).

The protein belongs to the UPF0250 family.

The chain is UPF0250 protein PSPTO_4820 from Pseudomonas syringae pv. tomato (strain ATCC BAA-871 / DC3000).